We begin with the raw amino-acid sequence, 146 residues long: Large ribosomal subunit protein uL15 (146 aa).

Residues 1–13 (MKLHELKPAEGSR) show a composition bias toward basic and acidic residues. The segment at 1 to 60 (MKLHELKPAEGSRKQRNRVGRGIGSGNGKTAGKGHKGQNARSGGGVRPGFEGGQNPLFRR) is disordered. Gly residues-rich tracts occupy residues 21-31 (RGIGSGNGKTA) and 42-52 (SGGGVRPGFEG).

It belongs to the universal ribosomal protein uL15 family. In terms of assembly, part of the 50S ribosomal subunit.

Functionally, binds to the 23S rRNA. The sequence is that of Large ribosomal subunit protein uL15 from Lysinibacillus sphaericus (strain C3-41).